The following is a 349-amino-acid chain: Increased DNA methylation 2 (349 aa).

The disordered stretch occupies residues 210-230; the sequence is EDNAGTCTSGEESDVAAKPEV. Residues 233-349 enclose the sHSP domain; that stretch reads EAHGGLMVGL…VMKNLQKQTV (117 aa).

The protein belongs to the small heat shock protein (HSP20) family. Homodimer or oligomer. May form an 16-mer complex. Interacts with MBD7 (via C-terminus). Interacts with IDM1 (via N-terminus). Interacts with IMD3. Part of a complex made of MBD7, IDM1, IDM2, IDM3 and ROS1. As to expression, expressed in cotyledons and hypocotyls in young seedlings.

It is found in the nucleus. Its subcellular location is the nucleoplasm. In terms of biological role, prevents DNA hypermethylation and transcriptional silencing of transgenes and of some endogenous genes. May act as a molecular chaperone of IDM1, regulating its H3K18 acetylation activity. The sequence is that of Increased DNA methylation 2 from Arabidopsis thaliana (Mouse-ear cress).